A 136-amino-acid polypeptide reads, in one-letter code: Large ribosomal subunit protein bL21 (136 aa).

This sequence belongs to the bacterial ribosomal protein bL21 family. As to quaternary structure, part of the 50S ribosomal subunit. Contacts protein L20.

In terms of biological role, this protein binds to 23S rRNA in the presence of protein L20. The sequence is that of Large ribosomal subunit protein bL21 from Trichodesmium erythraeum (strain IMS101).